Here is a 306-residue protein sequence, read N- to C-terminus: Protein-L-isoaspartate O-methyltransferase 2 (306 aa).

A disordered region spans residues M1–G82. A compositionally biased stretch (pro residues) spans P38–P48. The span at P54 to T77 shows a compositional bias: low complexity. Residue S142 is part of the active site.

Belongs to the methyltransferase superfamily. L-isoaspartyl/D-aspartyl protein methyltransferase family.

The protein resides in the cytoplasm. The enzyme catalyses [protein]-L-isoaspartate + S-adenosyl-L-methionine = [protein]-L-isoaspartate alpha-methyl ester + S-adenosyl-L-homocysteine. Catalyzes the methyl esterification of L-isoaspartyl residues in peptides and proteins that result from spontaneous decomposition of normal L-aspartyl and L-asparaginyl residues. It plays a role in the repair and/or degradation of damaged proteins. This chain is Protein-L-isoaspartate O-methyltransferase 2, found in Cupriavidus necator (strain ATCC 17699 / DSM 428 / KCTC 22496 / NCIMB 10442 / H16 / Stanier 337) (Ralstonia eutropha).